Reading from the N-terminus, the 702-residue chain is Serotransferrin-A (702 aa).

The N-terminal stretch at 1–19 is a signal peptide; the sequence is MDLSLRVALCLSMLALCLA. Transferrin-like domains follow at residues 26 to 340 and 353 to 685; these read VRWC…ALKE and VRWC…SLNK. 2 disulfide bridges follow: cysteine 29–cysteine 64 and cysteine 39–cysteine 55. Aspartate 79 and tyrosine 111 together coordinate Fe(3+). Cystine bridges form between cysteine 134/cysteine 217, cysteine 179/cysteine 192, and cysteine 245/cysteine 259. Residues threonine 136, lysine 140, alanine 142, and glycine 143 each coordinate hydrogencarbonate. Tyrosine 211 lines the Fe(3+) pocket. Position 267 (histidine 267) interacts with Fe(3+). Positions 340-349 are connecting region; it reads EGVKEDDSAA. Disulfide bonds link cysteine 356–cysteine 388 and cysteine 366–cysteine 379. The Fe(3+) site is built by aspartate 403 and tyrosine 442. Disulfide bonds link cysteine 413/cysteine 697, cysteine 431/cysteine 658, cysteine 465/cysteine 544, cysteine 489/cysteine 686, cysteine 499/cysteine 513, cysteine 510/cysteine 527, and cysteine 584/cysteine 598. Threonine 467, arginine 471, alanine 473, and glycine 474 together coordinate hydrogencarbonate. Tyrosine 538 is a Fe(3+) binding site. Histidine 606 serves as a coordination point for Fe(3+).

Belongs to the transferrin family. Monomer. In terms of tissue distribution, plasma.

The protein resides in the secreted. Transferrins are iron binding transport proteins which can bind two Fe(3+) ions in association with the binding of an anion, usually bicarbonate. It is responsible for the transport of iron from sites of absorption and heme degradation to those of storage and utilization. Serum transferrin may also have a further role in stimulating cell proliferation. In Xenopus laevis (African clawed frog), this protein is Serotransferrin-A (tf-a).